The sequence spans 498 residues: Glycerol kinase (498 aa).

Threonine 12 is a binding site for ADP. Threonine 12, threonine 13, and serine 14 together coordinate ATP. Threonine 12 provides a ligand contact to sn-glycerol 3-phosphate. Arginine 16 lines the ADP pocket. Positions 82, 83, 134, and 244 each coordinate sn-glycerol 3-phosphate. Residues arginine 82, glutamate 83, tyrosine 134, aspartate 244, and glutamine 245 each coordinate glycerol. Positions 266 and 310 each coordinate ADP. Positions 266, 310, 314, and 411 each coordinate ATP. The ADP site is built by glycine 411 and asparagine 415.

This sequence belongs to the FGGY kinase family.

It carries out the reaction glycerol + ATP = sn-glycerol 3-phosphate + ADP + H(+). It functions in the pathway polyol metabolism; glycerol degradation via glycerol kinase pathway; sn-glycerol 3-phosphate from glycerol: step 1/1. With respect to regulation, inhibited by fructose 1,6-bisphosphate (FBP). Key enzyme in the regulation of glycerol uptake and metabolism. Catalyzes the phosphorylation of glycerol to yield sn-glycerol 3-phosphate. This chain is Glycerol kinase, found in Chloroflexus aurantiacus (strain ATCC 29366 / DSM 635 / J-10-fl).